Consider the following 447-residue polypeptide: Chromosomal replication initiator protein DnaA (447 aa).

The segment at 1-70 (MQDFWSKAMD…EEILSEQLGE (70 aa)) is domain I, interacts with DnaA modulators. The tract at residues 70–110 (EPVTLLFAADPALEKPVASKTQTVTPVQSGGETGDQENFHS) is domain II. A disordered region spans residues 87-109 (ASKTQTVTPVQSGGETGDQENFH). The span at 88–99 (SKTQTVTPVQSG) shows a compositional bias: polar residues. A domain III, AAA+ region region spans residues 111 to 327 (GLDPRYTFDS…GALIRVSAYA (217 aa)). The ATP site is built by G155, G157, K158, and T159. The tract at residues 328 to 447 (SLTGKPITMA…LASLKSMLQK (120 aa)) is domain IV, binds dsDNA.

It belongs to the DnaA family. In terms of assembly, oligomerizes as a right-handed, spiral filament on DNA at oriC.

Its subcellular location is the cytoplasm. In terms of biological role, plays an essential role in the initiation and regulation of chromosomal replication. ATP-DnaA binds to the origin of replication (oriC) to initiate formation of the DNA replication initiation complex once per cell cycle. Binds the DnaA box (a 9 base pair repeat at the origin) and separates the double-stranded (ds)DNA. Forms a right-handed helical filament on oriC DNA; dsDNA binds to the exterior of the filament while single-stranded (ss)DNA is stabiized in the filament's interior. The ATP-DnaA-oriC complex binds and stabilizes one strand of the AT-rich DNA unwinding element (DUE), permitting loading of DNA polymerase. After initiation quickly degrades to an ADP-DnaA complex that is not apt for DNA replication. Binds acidic phospholipids. The sequence is that of Chromosomal replication initiator protein DnaA from Magnetococcus marinus (strain ATCC BAA-1437 / JCM 17883 / MC-1).